Here is a 372-residue protein sequence, read N- to C-terminus: MALKQLAAAVALALSIQAAQGAAVKEKRATCSNGATVGDASSCAWFDVLDDIQQNLFNGAQCGAEAHESIRLVFHDAIAISPALESQGKFGGGGADGSIILFDDIETNFHPNIGLDEIVNLQKPFIQKHGVTPGDFIAFAGAVAMSNCPGAPQMNFFTGRAPATQAAPDGLVPEPFHTVDQIISRVNDAGEFDELELVWMLSAHSVAAANDVDPTIQGLAFDSTPGVFDSQFFVETQLRGTAFPGSGGNQGEVESPLPGEMRLQSDSSIARDSRTACEWQSFVNNQSKLVSDFQFIFLALTQLGENPDAMTDCSDVIPISKPVPNNVPFSFFPAGKTMADVEQACAETPFPTLTTLPGPETSVQRIQPPPGA.

The signal sequence occupies residues 1–21 (MALKQLAAAVALALSIQAAQG). Residues 22–28 (AAVKEKR) constitute a propeptide that is removed on maturation. 2 disulfides stabilise this stretch: Cys31/Cys43 and Cys62/Cys148. His75 (proton acceptor) is an active-site residue. Positions 76, 94, 96, and 98 each coordinate Ca(2+). His204 is a binding site for heme b. Ca(2+)-binding residues include Ser205, Asp222, Thr224, Val227, and Asp229. An intrachain disulfide couples Cys277 to Cys345. A glycan (N-linked (GlcNAc...) asparagine) is linked at Asn285. A compositionally biased stretch (low complexity) spans 352 to 361 (TLTTLPGPET). The tract at residues 352-372 (TLTTLPGPETSVQRIQPPPGA) is disordered.

This sequence belongs to the peroxidase family. Ligninase subfamily. Requires heme b as cofactor. Ca(2+) is required as a cofactor.

The catalysed reaction is 1-(3,4-dimethoxyphenyl)-2-(2-methoxyphenoxy)propane-1,3-diol + H2O2 = 3,4-dimethoxybenzaldehyde + guaiacol + glycolaldehyde + H2O. It carries out the reaction 2 (3,4-dimethoxyphenyl)methanol + H2O2 = 2 (3,4-dimethoxyphenyl)methanol radical + 2 H2O. It functions in the pathway secondary metabolite metabolism; lignin degradation. Functionally, depolymerization of lignin. Catalyzes the C(alpha)-C(beta) cleavage of the propyl side chains of lignin. The polypeptide is Ligninase LG6 (GLG6) (Phanerodontia chrysosporium (White-rot fungus)).